A 295-amino-acid polypeptide reads, in one-letter code: Glycine N-acyltransferase (295 aa).

N6-acetyllysine; alternate is present on residues Lys-15, Lys-126, and Lys-140. An N6-succinyllysine; alternate mark is found at Lys-15, Lys-126, and Lys-140. Lys-158 bears the N6-acetyllysine mark. Position 168 is an N6-succinyllysine (Lys-168). Lys-255 carries the N6-acetyllysine; alternate modification. Lys-255 carries the post-translational modification N6-succinyllysine; alternate.

This sequence belongs to the glycine N-acyltransferase family. As to expression, detected in liver (at protein level).

It localises to the mitochondrion. The catalysed reaction is an acyl-CoA + glycine = an N-acylglycine + CoA + H(+). It carries out the reaction benzoyl-CoA + glycine = N-benzoylglycine + CoA + H(+). Functionally, mitochondrial acyltransferase which transfers an acyl group to the N-terminus of glycine and glutamine, although much less efficiently. Can conjugate a multitude of substrates to form a variety of N-acylglycines, thereby detoxify xenobiotics, such as benzoic acid or salicylic acid, and endogenous organic acids, such as isovaleric acid. The sequence is that of Glycine N-acyltransferase (GLYAT) from Bos taurus (Bovine).